The sequence spans 225 residues: Endonuclease V (225 aa).

Mg(2+) contacts are provided by D43 and D110.

The protein belongs to the endonuclease V family. Mg(2+) serves as cofactor.

It localises to the cytoplasm. The enzyme catalyses Endonucleolytic cleavage at apurinic or apyrimidinic sites to products with a 5'-phosphate.. In terms of biological role, DNA repair enzyme involved in the repair of deaminated bases. Selectively cleaves double-stranded DNA at the second phosphodiester bond 3' to a deoxyinosine leaving behind the intact lesion on the nicked DNA. The sequence is that of Endonuclease V from Thermotoga sp. (strain RQ2).